The chain runs to 100 residues: Urease subunit gamma (100 aa).

Belongs to the urease gamma subunit family. In terms of assembly, heterotrimer of UreA (gamma), UreB (beta) and UreC (alpha) subunits. Three heterotrimers associate to form the active enzyme.

The protein resides in the cytoplasm. It catalyses the reaction urea + 2 H2O + H(+) = hydrogencarbonate + 2 NH4(+). It functions in the pathway nitrogen metabolism; urea degradation; CO(2) and NH(3) from urea (urease route): step 1/1. The chain is Urease subunit gamma from Prochlorococcus marinus (strain NATL1A).